Here is a 112-residue protein sequence, read N- to C-terminus: Integration host factor subunit alpha (112 aa).

Belongs to the bacterial histone-like protein family. In terms of assembly, heterodimer of an alpha and a beta chain.

Functionally, this protein is one of the two subunits of integration host factor, a specific DNA-binding protein that functions in genetic recombination as well as in transcriptional and translational control. The protein is Integration host factor subunit alpha of Allorhizobium ampelinum (strain ATCC BAA-846 / DSM 112012 / S4) (Agrobacterium vitis (strain S4)).